The primary structure comprises 123 residues: Small ribosomal subunit protein uS12 (123 aa).

Aspartate 89 is modified (3-methylthioaspartic acid).

Belongs to the universal ribosomal protein uS12 family. In terms of assembly, part of the 30S ribosomal subunit. Contacts proteins S8 and S17. May interact with IF1 in the 30S initiation complex.

Its function is as follows. With S4 and S5 plays an important role in translational accuracy. Interacts with and stabilizes bases of the 16S rRNA that are involved in tRNA selection in the A site and with the mRNA backbone. Located at the interface of the 30S and 50S subunits, it traverses the body of the 30S subunit contacting proteins on the other side and probably holding the rRNA structure together. The combined cluster of proteins S8, S12 and S17 appears to hold together the shoulder and platform of the 30S subunit. The polypeptide is Small ribosomal subunit protein uS12 (Afipia carboxidovorans (strain ATCC 49405 / DSM 1227 / KCTC 32145 / OM5) (Oligotropha carboxidovorans)).